Reading from the N-terminus, the 344-residue chain is Serine/arginine-rich splicing factor 6 (344 aa).

An RRM 1 domain is found at 1–72 (MPRVYIGRLS…ERVIVEHARG (72 aa)). Phosphoserine is present on residues serine 45, serine 81, and serine 84. Positions 75–103 (RDRDGYSYGSRSGGGGYSSRRTSGRDKYG) are disordered. In terms of domain architecture, RRM 2 spans 110 to 183 (YRLIVENLSS…RNIRLIEDKP (74 aa)). Lysine 165 is subject to N6-acetyllysine. The segment at 176–344 (IRLIEDKPRT…RSRSRSSSRD (169 aa)) is disordered. Lysine 182 participates in a covalent cross-link: Glycyl lysine isopeptide (Lys-Gly) (interchain with G-Cter in SUMO2). Residues 185 to 250 (TSHRRSYSGS…RKSRSKSKSK (66 aa)) are compositionally biased toward basic residues. Basic and acidic residues-rich tracts occupy residues 264–273 (RSKDEYEKSR) and 280–291 (SPKENGKGDIKS). Residues serine 297 and serine 299 each carry the phosphoserine modification. A Phosphoserine; by DYRK1A modification is found at serine 303. Phosphoserine occurs at positions 314 and 316. The segment covering 322 to 344 (ATSRSRSRSRSKSRSRSRSSSRD) has biased composition (basic residues).

This sequence belongs to the splicing factor SR family. As to quaternary structure, binds SREK1/SFRS12. Interacts with DYRK1A. Extensively phosphorylated on serine residues in the RS domain. Phosphorylated by DYRK1A, probably in the RS domain. Phosphorylation by DYRK1A modulates alternative splice site selection and inhibits the expression of MAPT/Tau exon 10.

The protein resides in the nucleus. It is found in the nucleus speckle. Its function is as follows. Plays a role in constitutive splicing and modulates the selection of alternative splice sites. Plays a role in the alternative splicing of MAPT/Tau exon 10. Binds to alternative exons of TNC pre-mRNA and promotes the expression of alternatively spliced TNC. Plays a role in wound healing and in the regulation of keratinocyte differentiation and proliferation via its role in alternative splicing. The sequence is that of Serine/arginine-rich splicing factor 6 (SRSF6) from Homo sapiens (Human).